Consider the following 126-residue polypeptide: Aspartate 1-decarboxylase (126 aa).

The active-site Schiff-base intermediate with substrate; via pyruvic acid is Ser25. Residue Ser25 is modified to Pyruvic acid (Ser). Thr57 contributes to the substrate binding site. The Proton donor role is filled by Tyr58. Gly73–Ala75 contacts substrate.

The protein belongs to the PanD family. Heterooctamer of four alpha and four beta subunits. Requires pyruvate as cofactor. In terms of processing, is synthesized initially as an inactive proenzyme, which is activated by self-cleavage at a specific serine bond to produce a beta-subunit with a hydroxyl group at its C-terminus and an alpha-subunit with a pyruvoyl group at its N-terminus.

It localises to the cytoplasm. The enzyme catalyses L-aspartate + H(+) = beta-alanine + CO2. It functions in the pathway cofactor biosynthesis; (R)-pantothenate biosynthesis; beta-alanine from L-aspartate: step 1/1. Its function is as follows. Catalyzes the pyruvoyl-dependent decarboxylation of aspartate to produce beta-alanine. The polypeptide is Aspartate 1-decarboxylase (Xanthomonas campestris pv. campestris (strain B100)).